Here is a 3396-residue protein sequence, read N- to C-terminus: Versican core protein (3396 aa).

An N-terminal signal peptide occupies residues methionine 1–alanine 20. In terms of domain architecture, Ig-like V-type spans leucine 21 to threonine 146. 5 cysteine pairs are disulfide-bonded: cysteine 44–cysteine 130, cysteine 172–cysteine 243, cysteine 196–cysteine 217, cysteine 270–cysteine 345, and cysteine 294–cysteine 315. N-linked (GlcNAc...) asparagine glycosylation occurs at asparagine 57. Link domains follow at residues valine 150–valine 245 and aspartate 251–lysine 347. The N-linked (GlcNAc...) asparagine glycan is linked to asparagine 330. Residues proline 348–glycine 1335 are GAG-alpha (glucosaminoglycan attachment domain). A compositionally biased stretch (polar residues) spans alanine 420–threonine 430. Disordered stretches follow at residues alanine 420–tyrosine 439 and serine 603–tryptophan 622. Asparagine 615 carries N-linked (GlcNAc...) asparagine glycosylation. An O-linked (Xyl...) (chondroitin sulfate) serine glycan is attached at serine 659. N-linked (GlcNAc...) asparagine glycosylation is found at asparagine 782 and asparagine 809. Disordered stretches follow at residues glutamate 807–alanine 829, isoleucine 1126–leucine 1154, and arginine 1277–threonine 1316. The span at threonine 811 to serine 824 shows a compositional bias: polar residues. Over residues glutamate 1143–leucine 1154 the composition is skewed to low complexity. Residues asparagine 1332 and asparagine 1398 are each glycosylated (N-linked (GlcNAc...) asparagine). The segment at arginine 1336 to glycine 3089 is GAG-beta. Disordered stretches follow at residues valine 1420–glutamate 1497 and phenylalanine 1510–proline 1539. Basic and acidic residues predominate over residues lysine 1422–glutamine 1433. Residues asparagine 1442 and asparagine 1468 are each glycosylated (N-linked (GlcNAc...) asparagine). Positions glutamate 1469–threonine 1480 are enriched in low complexity. A compositionally biased stretch (basic and acidic residues) spans lysine 1517–glutamate 1538. Serine 1548 and serine 1631 each carry an O-linked (Xyl...) (chondroitin sulfate) serine glycan. Asparagine 1663 is a glycosylation site (N-linked (GlcNAc...) asparagine). Disordered regions lie at residues serine 1717–threonine 1737 and proline 1759–serine 1789. A compositionally biased stretch (basic and acidic residues) spans valine 1720–glutamate 1729. Residues asparagine 1760 to glutamine 1781 are compositionally biased toward polar residues. N-linked (GlcNAc...) asparagine glycosylation is present at asparagine 1898. 2 O-linked (Xyl...) (chondroitin sulfate) serine glycosylation sites follow: serine 1935 and serine 1959. Disordered stretches follow at residues alanine 1962–valine 1994, arginine 2107–alanine 2134, and lysine 2168–asparagine 2188. Low complexity predominate over residues threonine 1969 to valine 1978. Positions glutamate 2111–isoleucine 2120 are enriched in acidic residues. Serine 2116 bears the Phosphoserine; by FAM20C mark. N-linked (GlcNAc...) asparagine glycosylation is present at asparagine 2179. 2 O-linked (Xyl...) (chondroitin sulfate) serine glycosylation sites follow: serine 2247 and serine 2254. N-linked (GlcNAc...) asparagine glycans are attached at residues asparagine 2272, asparagine 2280, asparagine 2360, asparagine 2385, and asparagine 2392. Disordered stretches follow at residues threonine 2371 to threonine 2396, serine 2445 to serine 2473, serine 2493 to glycine 2518, and aspartate 2598 to threonine 2617. Composition is skewed to polar residues over residues serine 2445–serine 2461 and asparagine 2496–glutamate 2513. N-linked (GlcNAc...) asparagine glycosylation is present at asparagine 2496. The residue at position 2608 (serine 2608) is a Phosphoserine. Position 2617 is a phosphothreonine (threonine 2617). Asparagine 2628 carries N-linked (GlcNAc...) asparagine glycosylation. O-linked (Xyl...) (chondroitin sulfate) serine glycosylation is found at serine 2722, serine 2723, and serine 2767. Disordered stretches follow at residues glycine 2834–serine 2856 and glutamate 2881–glycine 2905. Over residues threonine 2896–glycine 2905 the composition is skewed to basic and acidic residues. The N-linked (GlcNAc...) asparagine glycan is linked to asparagine 2934. An O-linked (Xyl...) (chondroitin sulfate) serine glycan is attached at serine 2941. An N-linked (GlcNAc...) asparagine glycan is attached at asparagine 3067. In terms of domain architecture, EGF-like 1 spans glycine 3089–glutamate 3125. Intrachain disulfides connect cysteine 3093–cysteine 3104, cysteine 3098–cysteine 3113, cysteine 3115–cysteine 3124, cysteine 3131–cysteine 3142, cysteine 3136–cysteine 3151, cysteine 3153–cysteine 3162, cysteine 3169–cysteine 3180, cysteine 3197–cysteine 3289, cysteine 3265–cysteine 3281, cysteine 3296–cysteine 3339, and cysteine 3325–cysteine 3352. The 37-residue stretch at aspartate 3127–glutamate 3163 folds into the EGF-like 2; calcium-binding domain. Residues phenylalanine 3176–lysine 3290 form the C-type lectin domain. Positions valine 3294 to asparagine 3354 constitute a Sushi domain. Residues asparagine 3369 and asparagine 3379 are each glycosylated (N-linked (GlcNAc...) asparagine). The segment covering serine 3371–threonine 3380 has biased composition (polar residues). The tract at residues serine 3371–arginine 3396 is disordered.

The protein belongs to the aggrecan/versican proteoglycan family. In terms of assembly, interacts with FBLN1. In terms of processing, phosphorylated by FAM20C in the extracellular medium. Proteolytically cleaved by ADAMTS5 and ADAMTS15 in the pericellular matrix surrounding myoblasts, facilitating myoblast contact and fusion which is required for skeletal muscle development and regeneration. Detected in placenta (at protein level). Detected in cerebrospinal fluid, fibroblasts and urine (at protein level). Expressed in the retina (at protein level). Cerebral white matter and plasma. Isoform V0: Expressed in normal brain, gliomas, medulloblastomas, schwannomas, neurofibromas, and meningiomas. Isoform V1: Expressed in normal brain, gliomas, medulloblastomas, schwannomas, neurofibromas, and meningiomas. Isoform V2: Restricted to normal brain and gliomas. Isoform V3: Found in all these tissues except medulloblastomas.

It is found in the secreted. Its subcellular location is the extracellular space. The protein localises to the extracellular matrix. The protein resides in the cell projection. It localises to the cilium. It is found in the photoreceptor outer segment. Its subcellular location is the interphotoreceptor matrix. May play a role in intercellular signaling and in connecting cells with the extracellular matrix. May take part in the regulation of cell motility, growth and differentiation. Binds hyaluronic acid. The protein is Versican core protein (VCAN) of Homo sapiens (Human).